Here is a 318-residue protein sequence, read N- to C-terminus: L-lactate dehydrogenase 1 (318 aa).

NAD(+) is bound by residues Val-17, Asp-38, Lys-43, Tyr-69, and 83 to 84 (GA). Substrate contacts are provided by residues Gln-86, Arg-92, and 124–127 (NPVD). NAD(+)-binding positions include 122–124 (ATN) and Ser-147. 152 to 155 (DTGR) contacts substrate. Residues Arg-157 and His-172 each coordinate beta-D-fructose 1,6-bisphosphate. Residue His-179 is the Proton acceptor of the active site. At Tyr-224 the chain carries Phosphotyrosine. Thr-233 contacts substrate.

Belongs to the LDH/MDH superfamily. LDH family. In terms of assembly, homotetramer.

The protein localises to the cytoplasm. The enzyme catalyses (S)-lactate + NAD(+) = pyruvate + NADH + H(+). It functions in the pathway fermentation; pyruvate fermentation to lactate; (S)-lactate from pyruvate: step 1/1. With respect to regulation, allosterically activated by fructose 1,6-bisphosphate (FBP). Catalyzes the conversion of lactate to pyruvate. The polypeptide is L-lactate dehydrogenase 1 (Peribacillus psychrosaccharolyticus (Bacillus psychrosaccharolyticus)).